Consider the following 316-residue polypeptide: Phosphate acyltransferase (316 aa).

This sequence belongs to the PlsX family. Homodimer. Probably interacts with PlsY.

Its subcellular location is the cytoplasm. It carries out the reaction a fatty acyl-[ACP] + phosphate = an acyl phosphate + holo-[ACP]. It functions in the pathway lipid metabolism; phospholipid metabolism. Functionally, catalyzes the reversible formation of acyl-phosphate (acyl-PO(4)) from acyl-[acyl-carrier-protein] (acyl-ACP). This enzyme utilizes acyl-ACP as fatty acyl donor, but not acyl-CoA. This Chlamydia abortus (strain DSM 27085 / S26/3) (Chlamydophila abortus) protein is Phosphate acyltransferase.